Reading from the N-terminus, the 390-residue chain is Dynein regulatory complex subunit 5 (390 aa).

LRR repeat units follow at residues 182–205 (TETL…MLAS), 210–233 (NLSI…ALAK), and 238–261 (HSVI…SLAR).

Belongs to the DRC5 family. In terms of assembly, component of the nexin-dynein regulatory complex (N-DRC). Interacts with DRC1, DRC2, DRC3, DRC4, DRC7 and DRC11.

Its subcellular location is the cell projection. The protein resides in the cilium. It is found in the flagellum. The protein localises to the cytoplasm. It localises to the cytoskeleton. Its subcellular location is the flagellum axoneme. In terms of biological role, component of the nexin-dynein regulatory complex (N-DRC) a key regulator of ciliary/flagellar motility which maintains the alignment and integrity of the distal axoneme and regulates microtubule sliding in motile axonemes. May play a role in the assembly of N-DRC. This chain is Dynein regulatory complex subunit 5, found in Chlamydomonas reinhardtii (Chlamydomonas smithii).